Here is a 236-residue protein sequence, read N- to C-terminus: Endonuclease NucS (236 aa).

It belongs to the NucS endonuclease family.

The protein resides in the cytoplasm. Cleaves both 3' and 5' ssDNA extremities of branched DNA structures. The protein is Endonuclease NucS of Saccharolobus solfataricus (strain ATCC 35092 / DSM 1617 / JCM 11322 / P2) (Sulfolobus solfataricus).